The primary structure comprises 496 residues: Acyltransferase M4 (496 aa).

Residue His163 is the Proton acceptor of the active site.

The protein belongs to the plant acyltransferase family. In terms of assembly, monomer.

It functions in the pathway secondary metabolite biosynthesis. In terms of biological role, acyltransferase; part of the gene cluster that mediates the biosynthesis of squalestatin S1 (SQS1, also known as zaragozic acid A), a heavily oxidized fungal polyketide that offers potent cholesterol lowering activity by targeting squalene synthase (SS). SQS1 is composed of a 2,8-dioxobicyclic[3.2.1]octane-3,4,5-tricarboxyclic acid core that is connected to two lipophilic polyketide arms. These initial steps feature the priming of an unusual benzoic acid starter unit onto the highly reducing polyketide synthase pks2, followed by oxaloacetate extension and product release to generate a tricarboxylic acid containing product. The phenylalanine ammonia lyase (PAL) M7 and the acyl-CoA ligase M9 are involved in transforming phenylalanine into benzoyl-CoA. The citrate synthase-like protein R3 is involved in connecting the C-alpha-carbons of the hexaketide chain and oxaloacetate to afford the tricarboxylic acid unit. The potential hydrolytic enzymes, M8 and M10, are in close proximity to pks2 and may participate in product release. On the other side, the tetraketide arm is synthesized by a the squalestatin tetraketide synthase pks1 and enzymatically esterified to the core in the last biosynthetic step, by the acetyltransferase M4. The biosynthesis of the tetraketide must involve 3 rounds of chain extension. After the first and second rounds methyl-transfer occurs, and in all rounds of extension the ketoreductase and dehydratase are active. The enoyl reductase and C-MeT of pks1 are not active in the final round of extension. The acetyltransferase M4 appears to have a broad substrate selectivity for its acyl CoA substrate, allowing the in vitro synthesis of novel squalestatins. The biosynthesis of SQS1 requires several oxidative steps likely performed by oxidoreductases M1, R1 and R2. Finally, in support of the identification of the cluster as being responsible for SQS1 production, the cluster contains a gene encoding a putative squalene synthase (SS) R6, suggesting a likely mechanism for self-resistance. The protein is Acyltransferase M4 of Phoma sp. (strain ATCC 20986 / MF5453).